The following is a 73-amino-acid chain: Kazal peptide Pr13a (73 aa).

Positions 1–20 (MKYIILFLVLIGLQANLALG) are cleaved as a signal peptide. One can recognise a Kazal-like domain in the interval 21–73 (SKCKCDCTKYPYSPVCAKELKTGDTETFNNVCQLQCYNCTHMKNYVVIYSGSC). Cystine bridges form between cysteine 23–cysteine 59, cysteine 27–cysteine 52, and cysteine 36–cysteine 73.

As to expression, expressed by the venom gland (anterior main gland) (at protein level).

The protein resides in the secreted. May act as a serine protease inhibitor, since it possess the kazal serine protease inhibitor signature. The chain is Kazal peptide Pr13a from Platymeris rhadamanthus (Red spot assassin bug).